The sequence spans 167 residues: Endoribonuclease YbeY (167 aa).

Zn(2+) is bound by residues H126, H130, and H136.

The protein belongs to the endoribonuclease YbeY family. Zn(2+) is required as a cofactor.

It localises to the cytoplasm. Its function is as follows. Single strand-specific metallo-endoribonuclease involved in late-stage 70S ribosome quality control and in maturation of the 3' terminus of the 16S rRNA. In Novosphingobium aromaticivorans (strain ATCC 700278 / DSM 12444 / CCUG 56034 / CIP 105152 / NBRC 16084 / F199), this protein is Endoribonuclease YbeY.